Here is a 466-residue protein sequence, read N- to C-terminus: Hydroxyacid-oxoacid transhydrogenase, mitochondrial (466 aa).

The residue at position 444 (K444) is an N6-acetyllysine. At S451 the chain carries Phosphoserine.

This sequence belongs to the iron-containing alcohol dehydrogenase family. Hydroxyacid-oxoacid transhydrogenase subfamily.

Its subcellular location is the mitochondrion. It catalyses the reaction (S)-3-hydroxybutanoate + 2-oxoglutarate = (R)-2-hydroxyglutarate + acetoacetate. The enzyme catalyses 4-hydroxybutanoate + 2-oxoglutarate = (R)-2-hydroxyglutarate + succinate semialdehyde. In terms of biological role, catalyzes the cofactor-independent reversible oxidation of gamma-hydroxybutyrate (GHB) to succinic semialdehyde (SSA) coupled to reduction of 2-ketoglutarate (2-KG) to D-2-hydroxyglutarate (D-2-HG). L-3-hydroxybutyrate (L-3-OHB) is also a substrate for HOT when using 2-KG as hydrogen acceptor, resulting in the formation of D-2-HG. The sequence is that of Hydroxyacid-oxoacid transhydrogenase, mitochondrial (ADHFE1) from Bos taurus (Bovine).